The primary structure comprises 889 residues: TATA box-binding protein-associated factor RNA polymerase I subunit B (889 aa).

The segment at 1 to 33 (MAPETNEKCKACGGFNFSMIDGFKYCDRCGTLL) adopts an RRN7-type zinc-finger fold. Zn(2+) contacts are provided by C9, C12, C26, and C29. The segment at 35–101 (NFEELEAEEG…DFFSRQALKN (67 aa)) is B-reader. The interval 102–113 (DELAFPHESTPD) is B-linker. An N-terminal cyclin fold region spans residues 114–351 (YLYRLGLRLA…SAKEQETKEA (238 aa)). The segment at 229-253 (NLDLDSEEDEEEEENPNLNKSMENL) is disordered. The segment covering 230–243 (LDLDSEEDEEEEEN) has biased composition (acidic residues). The segment at 352-510 (MTKVDYAEPY…LLVFRLTFDI (159 aa)) is C-terminal cyclin fold.

This sequence belongs to the RRN7/TAF1B family.

The protein localises to the nucleus. The protein resides in the nucleolus. In terms of biological role, component of RNA polymerase I core factor complex that acts as a GTF2B/TFIIB-like factor and plays a key role in multiple steps during transcription initiation such as pre-initiation complex (PIC) assembly and postpolymerase recruitment events in polymerase I (Pol I) transcription. Binds rDNA promoters and plays a role in Pol I recruitment. This chain is TATA box-binding protein-associated factor RNA polymerase I subunit B, found in Caenorhabditis briggsae.